The chain runs to 303 residues: MSEVEKTYCGFIAIVGRPNVGKSTLLNELLGQKISITSRKPQTTRHRIMGIHTEGPYQAIYVDTPGLHIEEKRAINRLMNRAASSSIGDVELVIFVVEGTNWTADDEMVVNKLRSLQCPVLLAINKVDNVTDKTKLLPHIQFLSQQMNFLDVVPISAEKGMNVDTIASIVRKHMPEADHHFPEDYITDRSQRFMASEIIREKLMRFLGEELPYSVTVEIEQFVPNERGGYNIHGLILVEREGQKKMVIGNKGSKIKTIGIEARQDMEQMFEAKVHLELWVKVKSGWADDERALRSLGYTDDLK.

The Era-type G domain occupies 8–176 (YCGFIAIVGR…ASIVRKHMPE (169 aa)). The segment at 16–23 (GRPNVGKS) is G1. Residue 16–23 (GRPNVGKS) coordinates GTP. The interval 42 to 46 (QTTRH) is G2. Positions 63–66 (DTPG) are G3. GTP is bound by residues 63-67 (DTPGL) and 125-128 (NKVD). The segment at 125-128 (NKVD) is G4. Residues 155-157 (ISA) form a G5 region. The KH type-2 domain maps to 207–284 (LGEELPYSVT…HLELWVKVKS (78 aa)).

The protein belongs to the TRAFAC class TrmE-Era-EngA-EngB-Septin-like GTPase superfamily. Era GTPase family. Monomer.

The protein resides in the cytoplasm. Its subcellular location is the cell inner membrane. Its function is as follows. An essential GTPase that binds both GDP and GTP, with rapid nucleotide exchange. Plays a role in 16S rRNA processing and 30S ribosomal subunit biogenesis and possibly also in cell cycle regulation and energy metabolism. The protein is GTPase Era of Yersinia enterocolitica serotype O:8 / biotype 1B (strain NCTC 13174 / 8081).